Consider the following 371-residue polypeptide: Epoxyqueuosine reductase (371 aa).

D137 (proton donor) is an active-site residue. The 4Fe-4S ferredoxin-type domain maps to 179–211 (IPLPVDTPVENQCGKCTACISSCPTNAILENGV). Positions 191, 194, 197, 201, 217, 244, 247, and 251 each coordinate [4Fe-4S] cluster.

It belongs to the QueG family. In terms of assembly, monomer. It depends on cob(II)alamin as a cofactor. [4Fe-4S] cluster is required as a cofactor.

It is found in the cytoplasm. It catalyses the reaction epoxyqueuosine(34) in tRNA + AH2 = queuosine(34) in tRNA + A + H2O. It functions in the pathway tRNA modification; tRNA-queuosine biosynthesis. Catalyzes the conversion of epoxyqueuosine (oQ) to queuosine (Q), which is a hypermodified base found in the wobble positions of tRNA(Asp), tRNA(Asn), tRNA(His) and tRNA(Tyr). This chain is Epoxyqueuosine reductase, found in Aliivibrio fischeri (strain ATCC 700601 / ES114) (Vibrio fischeri).